The primary structure comprises 131 residues: Phosphoribosyl-AMP cyclohydrolase (131 aa).

A Mg(2+)-binding site is contributed by aspartate 80. Cysteine 81 is a binding site for Zn(2+). Mg(2+) contacts are provided by aspartate 82 and aspartate 84. Zn(2+) is bound by residues cysteine 98 and cysteine 105.

Belongs to the PRA-CH family. As to quaternary structure, homodimer. The cofactor is Mg(2+). It depends on Zn(2+) as a cofactor.

The protein resides in the cytoplasm. The enzyme catalyses 1-(5-phospho-beta-D-ribosyl)-5'-AMP + H2O = 1-(5-phospho-beta-D-ribosyl)-5-[(5-phospho-beta-D-ribosylamino)methylideneamino]imidazole-4-carboxamide. It functions in the pathway amino-acid biosynthesis; L-histidine biosynthesis; L-histidine from 5-phospho-alpha-D-ribose 1-diphosphate: step 3/9. Functionally, catalyzes the hydrolysis of the adenine ring of phosphoribosyl-AMP. This chain is Phosphoribosyl-AMP cyclohydrolase, found in Azoarcus sp. (strain BH72).